The following is a 224-amino-acid chain: Large ribosomal subunit protein uL4 (224 aa).

The segment at 53–74 is disordered; it reads RNRSEVSHSTKKPFKQKGTGNA.

Belongs to the universal ribosomal protein uL4 family. Part of the 50S ribosomal subunit.

Its function is as follows. One of the primary rRNA binding proteins, this protein initially binds near the 5'-end of the 23S rRNA. It is important during the early stages of 50S assembly. It makes multiple contacts with different domains of the 23S rRNA in the assembled 50S subunit and ribosome. Forms part of the polypeptide exit tunnel. This chain is Large ribosomal subunit protein uL4, found in Chlamydia pneumoniae (Chlamydophila pneumoniae).